Reading from the N-terminus, the 258-residue chain is Transcriptional repressor AccR (258 aa).

An HTH deoR-type domain is found at 6–61 (TQDRQAKIVELLRDEQFLAIGRLTEHFQISVATARRDLSELHEAGLLRRTHGGAVS). Residues 23–42 (LAIGRLTEHFQISVATARRD) constitute a DNA-binding region (H-T-H motif).

In terms of biological role, represses opine catabolism and conjugal transfer of the nopaline Ti plasmid pTiC58. The sequence is that of Transcriptional repressor AccR (accR) from Agrobacterium fabrum (strain C58 / ATCC 33970) (Agrobacterium tumefaciens (strain C58)).